Reading from the N-terminus, the 438-residue chain is MTQSREVLNLLTLQTPSPSGGPRPCRRYQLRTPREGCGTVMEMMVAQRDHLRVSHVSPFAVSLQAPDRWERCRHGAPRFRLALGKGEYGRVEAVSKHECVKTFNEVVAFYHELVVCDLIEIARLRSRCPEKSEGLISFVDACMPCKQLFFPRYSCSLNDFSHWGPENIPPLVAGFESLLDAVVFLNEECGLFHSDISPCNILVERAQTETGLGKLVLTDMGLATPHTGNPQTGVSFVSSGGTQLYQMFVDRGPFMVSKDAYKPACVLLRCFRVAAALNWGEVKTDRFPICQQMSRVIDVSCLGYCLLNVIERILDVTKAEPTNRFYSRCSFTELQPQYFLKCLVHKVVLLEFLADLWKVEGGGLSIGVSSGAEFDSERLSLSERQDFRSWCRQLDTRYICTLYPYSNLLEGCEGLRDCLVNLLSLDYFSPFGRKSLES.

Residues 77–340 (PRFRLALGKG…FTELQPQYFL (264 aa)) form the Protein kinase domain.

The protein belongs to the protein kinase superfamily. Tyr protein kinase family.

The chain is Probable inactive protein kinase 38 (36) from Equus caballus (Horse).